Reading from the N-terminus, the 695-residue chain is A-kinase anchor protein 17A (695 aa).

Residues 83–112 form a PKA-RI and PKA-RII subunit binding domain region; it reads VENKSLVKSFLACLDGKTIKLSGFSDILKV. K118 participates in a covalent cross-link: Glycyl lysine isopeptide (Lys-Gly) (interchain with G-Cter in SUMO1); alternate. A Glycyl lysine isopeptide (Lys-Gly) (interchain with G-Cter in SUMO2); alternate cross-link involves residue K118. An RRM domain is found at 147–256; the sequence is DTIHLEGLPC…KAVACNIKVS (110 aa). The disordered stretch occupies residues 279–337; it reads QELEQQREEQKRREKEAEERQRAEERKQKELEELERERKREEKLRKREQKQRDRELRRN. The segment at 425 to 454 is PKA-RI-alpha subunit binding domain; the sequence is LGLQRKERELRERLLSILLSKKPDDSHTHD. The tract at residues 482-695 is disordered; it reads TTLHPLGGQP…PSRHRSTWNR (214 aa). S537 carries the phosphoserine modification. A compositionally biased stretch (basic and acidic residues) spans 567–585; it reads VSRKDTRSEQDKCNREPSK. Basic residues-rich tracts occupy residues 598-609 and 618-628; these read RHKRERSRARRA and RKERRPHKKHA. Residues 629-644 are compositionally biased toward basic and acidic residues; that stretch reads YKDDSPRRRSTSPDHT. Phosphoserine is present on S633. Composition is skewed to basic residues over residues 645-658 and 666-695; these read RSRR…HRRE and SASR…TWNR.

In terms of assembly, monomer. Component of the spliceosome. Interacts with ZRANB2 and SFRS1/ASF through its Arg/Ser-rich domain. Interacts with RI and RII subunits of PKA. Widely expressed. Found in heart, brain, lung, liver, skeletal muscle, kidney and pancreas. Expressed in activated B-cells and placenta. Expressed in all cell lines tested including Jurkat-TAg, U-937 and HEK293 cells.

The protein resides in the nucleus speckle. Splice factor regulating alternative splice site selection for certain mRNA precursors. Mediates regulation of pre-mRNA splicing in a PKA-dependent manner. The polypeptide is A-kinase anchor protein 17A (AKAP17A) (Homo sapiens (Human)).